Consider the following 83-residue polypeptide: Large ribosomal subunit protein bL31B (83 aa).

It belongs to the bacterial ribosomal protein bL31 family. Type B subfamily. In terms of assembly, part of the 50S ribosomal subunit.

In Tropheryma whipplei (strain TW08/27) (Whipple's bacillus), this protein is Large ribosomal subunit protein bL31B.